The chain runs to 440 residues: MEGGGGGGSLPPFLSKTYEMVDDPSTDAVVGWTPAGTSFVVANQPEFCRDLLPKYFKHNNFSSFVRQLNTYGFRKVDPEQWEFANEDFIKGQRHRLKNIHRRKPIFSHSSHSQGAGPLTDNERKDYEEEIERLKSDNAALSSELQNNTLKKLNMEKRMQALEEKLFVVEDQQRSLISYVREIVKAPGFLSSFVQQQDHHRKKRRLPIPISFHEDANTQENQIMPCDLTNSPAQTFYRESFDKMESSLNSLENFLREASEEFGNDISYDDGVPGPSSTVVLTELHSPGESDPRVSSPPTRMRTSSAGAGDSHSSRDVAESTSCAESPPIPQMHSRVDTRAKVSEIDVNSEPAVTETGPSRDQPAEEPPAVTPGANDGFWQQFLTEQPGSSDAHQEAQSERRDGGNKVDEMKSGDRQHLWWGKRNVEQITEKLGLLTSTEKT.

Residues 121–181 (NERKDYEEEI…QRSLISYVRE (61 aa)) adopt a coiled-coil conformation. The hydrophobic repeat HR-A/B stretch occupies residues 133–183 (LKSDNAALSSELQNNTLKKLNMEKRMQALEEKLFVVEDQQRSLISYVREIV). The Nuclear export signal signature appears at 158–163 (MQALEE). Residues 200–204 (RKKRR) carry the Nuclear localization signal motif. A disordered region spans residues 264-417 (DISYDDGVPG…EMKSGDRQHL (154 aa)). Polar residues predominate over residues 295 to 305 (SPPTRMRTSSA). The span at 333–343 (SRVDTRAKVSE) shows a compositional bias: basic and acidic residues. Residues 375–384 (DGFWQQFLTE) carry the AHA motif. Residues 380–390 (QFLTEQPGSSD) are compositionally biased toward polar residues. The segment covering 391–417 (AHQEAQSERRDGGNKVDEMKSGDRQHL) has biased composition (basic and acidic residues).

It belongs to the HSF family. Class A subfamily. In terms of assembly, homotrimer. Post-translationally, exhibits temperature-dependent phosphorylation.

It is found in the cytoplasm. The protein localises to the nucleus. Its function is as follows. Transcriptional regulator that specifically binds DNA of heat shock promoter elements (HSE). The protein is Heat stress transcription factor A-4b (HSFA4B) of Oryza sativa subsp. japonica (Rice).